The sequence spans 186 residues: UPF0301 protein LHK_02881 (186 aa).

It belongs to the UPF0301 (AlgH) family.

The chain is UPF0301 protein LHK_02881 from Laribacter hongkongensis (strain HLHK9).